The sequence spans 971 residues: Exportin-2 (971 aa).

In terms of domain architecture, Importin N-terminal spans 29 to 102 (AEKFLESVEG…KANIVNLMLS (74 aa)).

It belongs to the XPO2/CSE1 family. In terms of assembly, interacts with cftr.

It is found in the cytoplasm. The protein localises to the nucleus. Export receptor for importin alpha. Mediates importin-alpha re-export from the nucleus to the cytoplasm after import substrates have been released into the nucleoplasm. Negatively regulates fluid secretion and plays a role in fluid homeostasis by down-regulating cftr activity. The protein is Exportin-2 (cse1l) of Oreochromis niloticus (Nile tilapia).